The chain runs to 533 residues: Na(+)/H(+) antiporter NhaB (533 aa).

The next 11 membrane-spanning stretches (helical) occupy residues isoleucine 10 to isoleucine 30, proline 67 to leucine 87, leucine 98 to phenylalanine 118, valine 131 to isoleucine 165, leucine 209 to proline 229, isoleucine 247 to valine 267, alanine 310 to isoleucine 330, glutamate 355 to isoleucine 375, leucine 396 to glycine 416, alanine 454 to isoleucine 474, and methionine 481 to glutamine 501.

Belongs to the NhaB Na(+)/H(+) (TC 2.A.34) antiporter family.

The protein localises to the cell inner membrane. It catalyses the reaction 2 Na(+)(in) + 3 H(+)(out) = 2 Na(+)(out) + 3 H(+)(in). Na(+)/H(+) antiporter that extrudes sodium in exchange for external protons. The protein is Na(+)/H(+) antiporter NhaB of Shewanella sp. (strain ANA-3).